A 276-amino-acid chain; its full sequence is MNRGMTLIELLVALALSIILSLGLYYSFRYSGIFFSQDKAISDLIEYARTAEEQLKFYFDRWGNGVPEGGTDCTYSFPNGYPKNRFCIIKGSSGNCDEIIFYGNTQGFLIVLDEKDEDEFNALACRMTNDEDDYYYIWKEDKPVDTTTGNRIGVSGGDCGIKGIIPNASVAKEINTLDKGTVTLQTGDAIIRVPKIIKIYCSETNGELYLKVSEQEANKAPVESPLVPVKEMEATLLPEGCDPTNGECTAVRFRITFVNRVGNEEYTLTKDIVLGR.

Residues 1–4 (MNRG) constitute a propeptide, leader sequence. Residue Met-5 is modified to N-methylmethionine. Residues 5–26 (MTLIELLVALALSIILSLGLYY) form a helical membrane-spanning segment.

It localises to the membrane. This is an uncharacterized protein from Aquifex aeolicus (strain VF5).